The chain runs to 319 residues: Bidirectional sugar transporter SWEET15 (319 aa).

The Extracellular segment spans residues 1 to 10 (MAFMSMERST). The chain crosses the membrane as a helical span at residues 11-31 (WAFTFGILGNLISLMVFLSPL). The MtN3/slv 1 domain maps to 13–99 (FTFGILGNLI…AMYLAYAPKS (87 aa)). At 32 to 50 (PTFYRVYRKKSTEGFQSTP) the chain is on the cytoplasmic side. The helical transmembrane segment at 51 to 71 (YVVTLFSCMLWMYYAFVKSGA) threads the bilayer. Residue Glu72 is a topological domain, extracellular. A helical transmembrane segment spans residues 73-93 (LLVTINGVGCVIETVYLAMYL). At 94–106 (AYAPKSARMLTAK) the chain is on the cytoplasmic side. A helical transmembrane segment spans residues 107-127 (MLLGLNIGLFGVIALVTLLLS). Topologically, residues 128 to 134 (RGELRVH) are extracellular. The helical transmembrane segment at 135–155 (VLGWICVAVSLSVFAAPLSII) threads the bilayer. One can recognise a MtN3/slv 2 domain in the interval 135–219 (VLGWICVAVS…ALYMAYRSKK (85 aa)). At 156-167 (RLVIRTKSVEFM) the chain is on the cytoplasmic side. A helical transmembrane segment spans residues 168-188 (PFSLSFFLVLSAVIWFLYGLL). Residues 189-191 (KKD) are Extracellular-facing. A helical membrane pass occupies residues 192–212 (VFVALPNVLGFVFGVAQMALY). The Cytoplasmic portion of the chain corresponds to 213–319 (MAYRSKKPLV…KPDMAIVVEV (107 aa)).

It belongs to the SWEET sugar transporter family. Forms homooligomers and/or heterooligomers.

It is found in the cell membrane. Its function is as follows. Mediates both low-affinity uptake and efflux of sugar across the plasma membrane. The polypeptide is Bidirectional sugar transporter SWEET15 (SWEET15) (Oryza sativa subsp. indica (Rice)).